Consider the following 323-residue polypeptide: Methionyl-tRNA formyltransferase (323 aa).

Residue serine 113–proline 116 participates in (6S)-5,6,7,8-tetrahydrofolate binding.

The protein belongs to the Fmt family.

The catalysed reaction is L-methionyl-tRNA(fMet) + (6R)-10-formyltetrahydrofolate = N-formyl-L-methionyl-tRNA(fMet) + (6S)-5,6,7,8-tetrahydrofolate + H(+). Its function is as follows. Attaches a formyl group to the free amino group of methionyl-tRNA(fMet). The formyl group appears to play a dual role in the initiator identity of N-formylmethionyl-tRNA by promoting its recognition by IF2 and preventing the misappropriation of this tRNA by the elongation apparatus. The polypeptide is Methionyl-tRNA formyltransferase (Nitrosococcus oceani (strain ATCC 19707 / BCRC 17464 / JCM 30415 / NCIMB 11848 / C-107)).